The chain runs to 289 residues: NADPH-dependent 7-cyano-7-deazaguanine reductase (289 aa).

Substrate is bound at residue 81–83; sequence IES. 83–84 serves as a coordination point for NADPH; it reads SK. Cysteine 196 (thioimide intermediate) is an active-site residue. The Proton donor role is filled by aspartate 203. Residue 235–236 participates in substrate binding; sequence HE. 264 to 265 contacts NADPH; that stretch reads RG.

It belongs to the GTP cyclohydrolase I family. QueF type 2 subfamily. In terms of assembly, homodimer.

It localises to the cytoplasm. The catalysed reaction is 7-aminomethyl-7-carbaguanine + 2 NADP(+) = 7-cyano-7-deazaguanine + 2 NADPH + 3 H(+). It participates in tRNA modification; tRNA-queuosine biosynthesis. Catalyzes the NADPH-dependent reduction of 7-cyano-7-deazaguanine (preQ0) to 7-aminomethyl-7-deazaguanine (preQ1). The polypeptide is NADPH-dependent 7-cyano-7-deazaguanine reductase (Albidiferax ferrireducens (strain ATCC BAA-621 / DSM 15236 / T118) (Rhodoferax ferrireducens)).